Here is a 385-residue protein sequence, read N- to C-terminus: MKWLLLLSLVVLSECLVKVPLVRKKSLRQNLIKNGKLKDFLKTHKHNPASKYFPEAAALIGDEPLENYLDTEYFGTIGIGTPAQDFTVIFDTGSSNLWVPSVYCSSLACSDHNQFNPDDSSTFEATSQELSITYGTGSMTGILGYDTVQVGGISDTNQIFGLSETEPGSFLYYAPFDGILGLAYPSISASGATPVFDNLWDQGLVSQDLFSVYLSSNDDSGSVVLLGGIDSSYYTGSLNWVPVSVEGYWQITLDSITMDGETIACSGGCQAIVDTGTSLLTGPTSAIANIQSDIGASENSDGEMVISCSSIDSLPDIVFTINGVQYPLSPSAYILQDDDSCTSGFEGMDVPTSSGELWILGDVFIRQYYTVFDRANNKVGLAPVA.

The first 15 residues, 1–15 (MKWLLLLSLVVLSEC), serve as a signal peptide directing secretion. Residues 16 to 59 (LVKVPLVRKKSLRQNLIKNGKLKDFLKTHKHNPASKYFPEAAAL) constitute a propeptide, activation peptide. In terms of domain architecture, Peptidase A1 spans 73–382 (YFGTIGIGTP…DRANNKVGLA (310 aa)). Asp91 is a catalytic residue. Cys104 and Cys109 are joined by a disulfide. Ser127 bears the Phosphoserine mark. Residues Cys265 and Cys269 are joined by a disulfide bond. Residue Asp274 is part of the active site. The cysteines at positions 308 and 341 are disulfide-linked.

This sequence belongs to the peptidase A1 family. In terms of processing, minor amounts of the active enzyme occur with 'Ala-58' at the amino end.

The protein localises to the secreted. The enzyme catalyses Preferential cleavage: hydrophobic, preferably aromatic, residues in P1 and P1' positions. Cleaves 1-Phe-|-Val-2, 4-Gln-|-His-5, 13-Glu-|-Ala-14, 14-Ala-|-Leu-15, 15-Leu-|-Tyr-16, 16-Tyr-|-Leu-17, 23-Gly-|-Phe-24, 24-Phe-|-Phe-25 and 25-Phe-|-Tyr-26 bonds in the B chain of insulin.. In terms of biological role, shows particularly broad specificity; although bonds involving phenylalanine and leucine are preferred, many others are also cleaved to some extent. The polypeptide is Pepsin A (PGA) (Sus scrofa (Pig)).